Reading from the N-terminus, the 90-residue chain is Small ribosomal subunit protein bS20 (90 aa).

Belongs to the bacterial ribosomal protein bS20 family.

Its function is as follows. Binds directly to 16S ribosomal RNA. This Acidiphilium cryptum (strain JF-5) protein is Small ribosomal subunit protein bS20.